Here is a 309-residue protein sequence, read N- to C-terminus: MRKIIVGSRKSKLALTQTNWFIDQLKALGLPYEFEVKEIVTKGDVILDVTLSKVGGKGLFVKEIEHALLTKEIDMAVHSMKDMPAVLPDGLTIGCTPKRVDPRDAFISKNGESFKDLAEGAILGTSSLRRSAQLLAARPDLQVKWIRGNIDTRLRKLKDEDYDAIILATAGLQRMGWDGEVITEHLDETLCVPAVGQGALAIECREDDTDLLQLLAHINDAVTERTVAAERVFLHKLEGGCQVPIAGYATLKENDAIELTALVGSMDGSVLLKEIVVGIDPKQVGLEAADRLIKQGAKELILAANKEQQ.

An S-(dipyrrolylmethanemethyl)cysteine modification is found at C241.

The protein belongs to the HMBS family. In terms of assembly, monomer. Requires dipyrromethane as cofactor.

The enzyme catalyses 4 porphobilinogen + H2O = hydroxymethylbilane + 4 NH4(+). It functions in the pathway porphyrin-containing compound metabolism; protoporphyrin-IX biosynthesis; coproporphyrinogen-III from 5-aminolevulinate: step 2/4. Its function is as follows. Tetrapolymerization of the monopyrrole PBG into the hydroxymethylbilane pre-uroporphyrinogen in several discrete steps. The polypeptide is Porphobilinogen deaminase (Bacillus mycoides (strain KBAB4) (Bacillus weihenstephanensis)).